Reading from the N-terminus, the 342-residue chain is L-threonine 3-dehydrogenase (342 aa).

Cys-39 lines the Zn(2+) pocket. Catalysis depends on charge relay system residues Thr-41 and His-44. Positions 64, 65, 94, 97, 100, and 108 each coordinate Zn(2+). NAD(+) is bound by residues Ile-176, Asp-196, Arg-201, 263 to 265 (LGI), and 287 to 288 (IY).

The protein belongs to the zinc-containing alcohol dehydrogenase family. In terms of assembly, homotetramer. The cofactor is Zn(2+).

The protein resides in the cytoplasm. The enzyme catalyses L-threonine + NAD(+) = (2S)-2-amino-3-oxobutanoate + NADH + H(+). It functions in the pathway amino-acid degradation; L-threonine degradation via oxydo-reductase pathway; glycine from L-threonine: step 1/2. Its function is as follows. Catalyzes the NAD(+)-dependent oxidation of L-threonine to 2-amino-3-ketobutyrate. This chain is L-threonine 3-dehydrogenase, found in Protochlamydia amoebophila (strain UWE25).